The following is a 388-amino-acid chain: Outer membrane protein assembly factor BamB (388 aa).

Positions 1 to 17 (MVLSLLSVMLLSGYKFL) are cleaved as a signal peptide.

This sequence belongs to the BamB family. Part of the Bam complex, which is composed of the outer membrane protein BamA, and four lipoproteins BamB, BamC, BamD and BamE.

It is found in the cell outer membrane. In terms of biological role, part of the outer membrane protein assembly complex, which is involved in assembly and insertion of beta-barrel proteins into the outer membrane. The polypeptide is Outer membrane protein assembly factor BamB (Moranella endobia (strain PCIT)).